Here is a 154-residue protein sequence, read N- to C-terminus: Endoribonuclease YbeY (154 aa).

Zn(2+) is bound by residues histidine 114, histidine 118, and histidine 124.

It belongs to the endoribonuclease YbeY family. The cofactor is Zn(2+).

It is found in the cytoplasm. Single strand-specific metallo-endoribonuclease involved in late-stage 70S ribosome quality control and in maturation of the 3' terminus of the 16S rRNA. This chain is Endoribonuclease YbeY, found in Aggregatibacter actinomycetemcomitans (Actinobacillus actinomycetemcomitans).